A 292-amino-acid chain; its full sequence is 11-beta-hydroxysteroid dehydrogenase 1 (292 aa).

Topologically, residues 2–7 (HFMKKY) are cytoplasmic. The helical; Signal-anchor for type II membrane protein transmembrane segment at 8-24 (LLPILVLFLAYYYYSTK) threads the bilayer. Over 25 to 292 (EEFRPEMLQG…SFTFDKLISS (268 aa)) the chain is Lumenal. Residues 41-67 (GASKGIGREMAYHLSEMGAHVVLTARS), 92-93 (TM), and 119-121 (NHI) contribute to the NADP(+) site. A glycan (N-linked (GlcNAc...) asparagine) is linked at N162. Substrate is bound at residue S170. Catalysis depends on Y183, which acts as the Proton acceptor. Position 183–187 (183–187 (YSASK)) interacts with NADP(+). The N-linked (GlcNAc...) asparagine glycan is linked to N207. NADP(+) is bound at residue 218–222 (INTET).

This sequence belongs to the short-chain dehydrogenases/reductases (SDR) family. As to quaternary structure, homodimer. Detected in adrenal gland, liver, kidney, testis, and at lower levels in brain and lung (at protein level).

It is found in the endoplasmic reticulum membrane. The enzyme catalyses an 11beta-hydroxysteroid + NADP(+) = an 11-oxosteroid + NADPH + H(+). It catalyses the reaction corticosterone + NADP(+) = 11-dehydrocorticosterone + NADPH + H(+). The catalysed reaction is a 7beta-hydroxysteroid + NADP(+) = a 7-oxosteroid + NADPH + H(+). It carries out the reaction 7-oxocholesterol + NADPH + H(+) = 7beta-hydroxycholesterol + NADP(+). The enzyme catalyses 7-oxocholesterol + NADPH + H(+) = 7alpha-hydroxycholesterol + NADP(+). It catalyses the reaction chenodeoxycholate + NADP(+) = 7-oxolithocholate + NADPH + H(+). The catalysed reaction is 7-oxolithocholate + NADPH + H(+) = ursodeoxycholate + NADP(+). It carries out the reaction glycochenodeoxycholate + NADP(+) = 7-oxoglycolithocholate + NADPH + H(+). The enzyme catalyses taurochenodeoxycholate + NADP(+) = 7-oxotaurolithocholate + NADPH + H(+). It catalyses the reaction tauroursodeoxycholate + NADP(+) = 7-oxotaurolithocholate + NADPH + H(+). The catalysed reaction is glycoursodeoxycholate + NADP(+) = 7-oxoglycolithocholate + NADPH + H(+). It carries out the reaction 7-oxopregnenolone + NADPH + H(+) = 7beta-hydroxypregnenolone + NADP(+). The enzyme catalyses 3beta,7alpha-dihydroxyandrost-5-en-17-one + NADP(+) = 3beta-hydroxy-5-androstene-7,17-dione + NADPH + H(+). It catalyses the reaction 3beta-hydroxy-5-androstene-7,17-dione + NADPH + H(+) = 3beta,7beta-dihydroxyandrost-5-en-17-one + NADP(+). The catalysed reaction is 3beta-hydroxy-5alpha-androstane-7,17-dione + NADPH + H(+) = 3beta,7beta-dihydroxy-5alpha-androstan-17-one + NADP(+). It functions in the pathway steroid metabolism. In terms of biological role, controls the reversible conversion of biologically active glucocorticoids such as 11-dehydrocorticosterone to corticosterone in the presence of NADP(H). Participates in the corticosteroid receptor-mediated anti-inflammatory response, as well as metabolic and homeostatic processes. Bidirectional in vitro, predominantly functions as a reductase in vivo, thereby increasing the concentration of active glucocorticoids. It has broad substrate specificity, besides glucocorticoids, it accepts other steroid and sterol substrates. Interconverts 7-oxo- and 7-hydroxy-neurosteroids such as 7-oxopregnenolone and 7beta-hydroxypregnenolone, 7-oxodehydroepiandrosterone (3beta-hydroxy-5-androstene-7,17-dione) and 7beta-hydroxydehydroepiandrosterone (3beta,7beta-dihydroxyandrost-5-en-17-one), among others. Catalyzes reversibly the conversion of the major dietary oxysterol, 7-ketocholesterol (7-oxocholesterol), into the more polar 7-beta-hydroxycholesterol and 7-alpha-hhydroxycholesterol metabolites. 7-oxocholesterol is one of the most important oxysterols, it participates in several events such as induction of apoptosis, accumulation in atherosclerotic lesions, lipid peroxidation, and induction of foam cell formation. Mediates the 7-oxo reduction of 7-oxolithocholate mainly to chenodeoxycholate, and to a lesser extent to ursodeoxycholate, both in its free form and when conjugated to glycine or taurine, providing a link between glucocorticoid activation and bile acid metabolism. Catalyzes the synthesis of 7-beta-25-dihydroxycholesterol from 7-oxo-25-hydroxycholesterol in vitro, which acts as a ligand for the G-protein-coupled receptor (GPCR) Epstein-Barr virus-induced gene 2 (EBI2) and may thereby regulate immune cell migration. This chain is 11-beta-hydroxysteroid dehydrogenase 1 (HSD11B1), found in Mesocricetus auratus (Golden hamster).